The sequence spans 141 residues: Large ribosomal subunit protein uL16 (141 aa).

Positions methionine 1 to methionine 17 are enriched in basic residues. The interval methionine 1 to asparagine 29 is disordered.

This sequence belongs to the universal ribosomal protein uL16 family. As to quaternary structure, part of the 50S ribosomal subunit.

Its function is as follows. Binds 23S rRNA and is also seen to make contacts with the A and possibly P site tRNAs. This chain is Large ribosomal subunit protein uL16, found in Flavobacterium johnsoniae (strain ATCC 17061 / DSM 2064 / JCM 8514 / BCRC 14874 / CCUG 350202 / NBRC 14942 / NCIMB 11054 / UW101) (Cytophaga johnsonae).